We begin with the raw amino-acid sequence, 101 residues long: NAD(P)H-quinone oxidoreductase subunit 4L, chloroplastic (101 aa).

A run of 3 helical transmembrane segments spans residues 2-22 (MFEYALVLSSYLFSMGIYGLI), 32-52 (MCLELILNAVNMNLVTFSDLF), and 61-81 (IFSIFVIAIAAAEAAIGPAIV).

This sequence belongs to the complex I subunit 4L family. As to quaternary structure, NDH is composed of at least 16 different subunits, 5 of which are encoded in the nucleus.

The protein resides in the plastid. Its subcellular location is the chloroplast thylakoid membrane. The enzyme catalyses a plastoquinone + NADH + (n+1) H(+)(in) = a plastoquinol + NAD(+) + n H(+)(out). It catalyses the reaction a plastoquinone + NADPH + (n+1) H(+)(in) = a plastoquinol + NADP(+) + n H(+)(out). In terms of biological role, NDH shuttles electrons from NAD(P)H:plastoquinone, via FMN and iron-sulfur (Fe-S) centers, to quinones in the photosynthetic chain and possibly in a chloroplast respiratory chain. The immediate electron acceptor for the enzyme in this species is believed to be plastoquinone. Couples the redox reaction to proton translocation, and thus conserves the redox energy in a proton gradient. The protein is NAD(P)H-quinone oxidoreductase subunit 4L, chloroplastic of Amborella trichopoda.